Reading from the N-terminus, the 415-residue chain is Isocitrate dehydrogenase [NADP] 1 (415 aa).

Position 104 (Thr-104) interacts with NADP(+). Residues Ser-113, Asn-115, Arg-119, Arg-129, and Arg-153 each contribute to the D-threo-isocitrate site. Asp-307 serves as a coordination point for Mg(2+). NADP(+)-binding positions include His-339–Tyr-345, Asn-352, Tyr-390, and Arg-394.

It belongs to the isocitrate and isopropylmalate dehydrogenases family. Homodimer. Mg(2+) serves as cofactor. It depends on Mn(2+) as a cofactor.

It catalyses the reaction D-threo-isocitrate + NADP(+) = 2-oxoglutarate + CO2 + NADPH. Functionally, catalyzes the oxidative decarboxylation of isocitrate to 2-oxoglutarate and carbon dioxide with the concomitant reduction of NADP(+). In Colwellia maris, this protein is Isocitrate dehydrogenase [NADP] 1.